We begin with the raw amino-acid sequence, 452 residues long: Translation initiation factor eIF2B subunit gamma (452 aa).

Methionine 1 carries the post-translational modification N-acetylmethionine. At serine 260 the chain carries Phosphoserine.

This sequence belongs to the eIF-2B gamma/epsilon subunits family. Component of the translation initiation factor 2B (eIF2B) complex which is a heterodecamer of two sets of five different subunits: alpha, beta, gamma, delta and epsilon. Subunits alpha, beta and delta comprise a regulatory subcomplex and subunits epsilon and gamma comprise a catalytic subcomplex. Within the complex, the hexameric regulatory complex resides at the center, with the two heterodimeric catalytic subcomplexes bound on opposite sides.

Its subcellular location is the cytoplasm. It is found in the cytosol. With respect to regulation, activated by the chemical integrated stress response (ISR) inhibitor ISRIB which stimulates guanine nucleotide exchange factor activity for both phosphorylated and unphosphorylated eIF2. Functionally, acts as a component of the translation initiation factor 2B (eIF2B) complex, which catalyzes the exchange of GDP for GTP on the eukaryotic initiation factor 2 (eIF2) complex gamma subunit. Its guanine nucleotide exchange factor activity is repressed when bound to eIF2 complex phosphorylated on the alpha subunit, thereby limiting the amount of methionyl-initiator methionine tRNA available to the ribosome and consequently global translation is repressed. This chain is Translation initiation factor eIF2B subunit gamma (EIF2B3), found in Macaca fascicularis (Crab-eating macaque).